The chain runs to 494 residues: Ribitol 5-phosphate transferase FKRP (494 aa).

Residues 1-6 (MRLTRC) lie on the Cytoplasmic side of the membrane. A helical transmembrane segment spans residues 7 to 29 (WAALAAAIILNLLVFFYVSWLQH). Residues 30-494 (QPRNSRARGP…NPALLSLTGG (465 aa)) lie on the Lumenal side of the membrane. An intrachain disulfide couples cysteine 168 to cysteine 191. 2 N-linked (GlcNAc...) asparagine glycosylation sites follow: asparagine 172 and asparagine 209. The Zn(2+) site is built by cysteine 289, cysteine 296, cysteine 317, and cysteine 318. Positions 289–318 (CSKESARCFGTVAGDTPAYLYEGRWTPPCC) are zinc finger loop. Residues glycine 345 and arginine 352 each coordinate CDP-L-ribitol. 3 CDP-L-ribitol regions span residues 359 to 364 (WDYDVD), 437 to 438 (QD), and 480 to 482 (NPE). Mg(2+) contacts are provided by aspartate 360, aspartate 362, and aspartate 364.

This sequence belongs to the LicD transferase family. In terms of assembly, homodimer; disulfide-linked. Forms a complex composed of FKRP, FKTN/fukutin, and RXYLT1/TMEM5. Also exists as large multimeric protein complexes. May interact with the dystrophin-glycoprotein complex (DGC). Post-translationally, N-glycosylated. Expressed in the retina, specifically in the inner segments of the photoreceptors, the outer plexiform layers, inner nuclear layers, and ganglion cell layers (at protein level). Expressed at highest levels in brain, lung, heart, kidney and liver.

The protein resides in the golgi apparatus membrane. Its subcellular location is the secreted. The protein localises to the cell membrane. It localises to the sarcolemma. It is found in the rough endoplasmic reticulum. The protein resides in the cytoplasm. The enzyme catalyses 3-O-[Rib-ol-P-3-beta-D-GalNAc-(1-&gt;3)-beta-D-GlcNAc-(1-&gt;4)-(O-6-P-alpha-D-Man)]-Thr-[protein] + CDP-L-ribitol = 3-O-[Rib-ol-P-Rib-ol-P-3-beta-D-GalNAc-(1-&gt;3)-beta-D-GlcNAc-(1-&gt;4)-(O-6-P-alpha-D-Man)]-Thr-[protein] + CMP + H(+). It participates in protein modification; protein glycosylation. Functionally, catalyzes the transfer of CDP-ribitol to ribitol 5-phosphate previously attached by FKTN/fukutin of to the phosphorylated O-mannosyl trisaccharide (N-acetylgalactosamine-beta-3-N-acetylglucosamine-beta-4-(phosphate-6-)mannose), a carbohydrate structure present in alpha-dystroglycan (DAG1). This constitutes the second step in the formation of the ribose 5-phosphate tandem repeat which links the phosphorylated O-mannosyl trisaccharide to the ligand binding moiety composed of repeats of 3-xylosyl-alpha-1,3-glucuronic acid-beta-1. In Mus musculus (Mouse), this protein is Ribitol 5-phosphate transferase FKRP.